We begin with the raw amino-acid sequence, 337 residues long: 1-aminocyclopropane-1-carboxylate deaminase (337 aa).

Position 50 is an N6-(pyridoxal phosphate)lysine (Lys50). The Nucleophile role is filled by Ser77.

The protein belongs to the ACC deaminase/D-cysteine desulfhydrase family. In terms of assembly, homotrimer. It depends on pyridoxal 5'-phosphate as a cofactor.

It catalyses the reaction 1-aminocyclopropane-1-carboxylate + H2O = 2-oxobutanoate + NH4(+). Functionally, catalyzes a cyclopropane ring-opening reaction, the irreversible conversion of 1-aminocyclopropane-1-carboxylate (ACC) to ammonia and alpha-ketobutyrate. Allows growth on ACC as a nitrogen source. The chain is 1-aminocyclopropane-1-carboxylate deaminase from Rhizobium radiobacter (Agrobacterium tumefaciens).